We begin with the raw amino-acid sequence, 106 residues long: Iron-sulfur cluster assembly protein CyaY (106 aa).

This sequence belongs to the frataxin family.

Functionally, involved in iron-sulfur (Fe-S) cluster assembly. May act as a regulator of Fe-S biogenesis. This chain is Iron-sulfur cluster assembly protein CyaY, found in Dickeya chrysanthemi (Pectobacterium chrysanthemi).